Reading from the N-terminus, the 216-residue chain is Proenkephalin-A-B (216 aa).

5 consecutive propeptides follow at residues 64–85, 93–131, 144–155, 165–175, and 183–207; these read MDEL…LAKN, EYDS…GEMN, STDLEDETRGIQ, VGRPEWWQDYQ, and TRFT…PDME. Residues 114–133 are disordered; the sequence is PESAIYHDNNSETPGEMNKR.

This sequence belongs to the opioid neuropeptide precursor family. In terms of processing, the N-terminal domain contains 6 conserved cysteines thought to be involved in disulfide bonding and/or processing.

Its subcellular location is the secreted. In terms of biological role, enkephalin neuropeptides compete with and mimic the effects of opiate drugs. They play a role in a number of physiologic functions, including pain perception and responses to stress. This is Proenkephalin-A-B (penk-b) from Xenopus laevis (African clawed frog).